The following is a 602-amino-acid chain: Alpha-glucosides permease MPH3 (602 aa).

Residues 1-106 are Cytoplasmic-facing; sequence MKNLSFLINR…AAAWSLLVST (106 aa). The helical transmembrane segment at 107–127 threads the bilayer; it reads TLIMEGYDTAILGAFYALPIF. Residues 128-142 are Extracellular-facing; the sequence is QRKFGSQNDKTGEWE. The helical transmembrane segment at 143-163 threads the bilayer; it reads ISASWQIGLTLCYMAGEIVGL. The Cytoplasmic portion of the chain corresponds to 164–178; that stretch reads QLTGPSVDLVGNRYT. Residues 179-199 traverse the membrane as a helical segment; the sequence is LIIALFFLAAFTFILYFCNSL. Position 200 (Gly200) is a topological domain, extracellular. Residues 201-221 form a helical membrane-spanning segment; it reads MIAVGQALCGMPWGCFQCLTV. The Cytoplasmic portion of the chain corresponds to 222 to 234; sequence SYASEICPLALRY. The helical transmembrane segment at 235–255 threads the bilayer; that stretch reads YLTTYSNLCWLFGQLFAAGIM. The Extracellular portion of the chain corresponds to 256 to 270; sequence KNSQKKYADSELGYK. The helical transmembrane segment at 271–291 threads the bilayer; it reads LPFALQWILPVPLALGIFFAP. At 292 to 363 the chain is on the cytoplasmic side; it reads ESPWWLVKKG…EDKINRRRTR (72 aa). Residues 364–384 traverse the membrane as a helical segment; the sequence is ITCLCWAGQATCGSILIGYST. The Extracellular portion of the chain corresponds to 385–397; that stretch reads YFYEKAGVSTEMS. A helical membrane pass occupies residues 398–418; sequence FTFSIIQYCLGICATFLSWWA. Residues 419-426 lie on the Cytoplasmic side of the membrane; it reads SKYFGRYD. A helical membrane pass occupies residues 427-447; it reads LYAFGLAFQTIVFFIIGGLGC. Topologically, residues 448-459 are extracellular; that stretch reads SSTHGSKMGSGS. The helical transmembrane segment at 460–480 threads the bilayer; that stretch reads LLMAVAFFYNLGIAPVVFCLV. Over 481–492 the chain is Cytoplasmic; the sequence is SEMPSSRLRTKT. A helical transmembrane segment spans residues 493–513; sequence IILARNTYNVVSIICSVLILY. The Extracellular segment spans residues 514–525; sequence QLNSKKWNWGAK. Residues 526–546 traverse the membrane as a helical segment; sequence SGFFWGVLCFCTLIWAVVDLP. The Cytoplasmic portion of the chain corresponds to 547-602; sequence ETAGKTFVEINELFKLGVSARKFKSTKVDPFVVKTPPKDVSHNDPKGDIEASIAEE. Basic and acidic residues predominate over residues 582–595; that stretch reads PPKDVSHNDPKGDI. The interval 582-602 is disordered; it reads PPKDVSHNDPKGDIEASIAEE.

The protein belongs to the major facilitator superfamily. Sugar transporter (TC 2.A.1.1) family.

It is found in the cell membrane. Functionally, high-affinity uptake of maltose and maltotriose. Also transports alpha-methylglucoside, glucose and turanose but not melezitose or trehalose. This is Alpha-glucosides permease MPH3 (MPH3) from Saccharomyces cerevisiae (strain ATCC 204508 / S288c) (Baker's yeast).